The following is a 547-amino-acid chain: Glucose-6-phosphate isomerase (547 aa).

Glu-353 functions as the Proton donor in the catalytic mechanism. Residues His-384 and Lys-512 contribute to the active site.

It belongs to the GPI family.

It is found in the cytoplasm. The enzyme catalyses alpha-D-glucose 6-phosphate = beta-D-fructose 6-phosphate. It functions in the pathway carbohydrate biosynthesis; gluconeogenesis. Its pathway is carbohydrate degradation; glycolysis; D-glyceraldehyde 3-phosphate and glycerone phosphate from D-glucose: step 2/4. Catalyzes the reversible isomerization of glucose-6-phosphate to fructose-6-phosphate. This chain is Glucose-6-phosphate isomerase, found in Glaesserella parasuis serovar 5 (strain SH0165) (Haemophilus parasuis).